The primary structure comprises 139 residues: Nucleoside diphosphate kinase (139 aa).

ATP-binding residues include lysine 10, phenylalanine 58, arginine 86, threonine 92, arginine 103, and asparagine 113. Residue histidine 116 is the Pros-phosphohistidine intermediate of the active site.

It belongs to the NDK family. As to quaternary structure, homotetramer. It depends on Mg(2+) as a cofactor.

Its subcellular location is the cytoplasm. The enzyme catalyses a 2'-deoxyribonucleoside 5'-diphosphate + ATP = a 2'-deoxyribonucleoside 5'-triphosphate + ADP. It catalyses the reaction a ribonucleoside 5'-diphosphate + ATP = a ribonucleoside 5'-triphosphate + ADP. Major role in the synthesis of nucleoside triphosphates other than ATP. The ATP gamma phosphate is transferred to the NDP beta phosphate via a ping-pong mechanism, using a phosphorylated active-site intermediate. The protein is Nucleoside diphosphate kinase of Nitratidesulfovibrio vulgaris (strain ATCC 29579 / DSM 644 / CCUG 34227 / NCIMB 8303 / VKM B-1760 / Hildenborough) (Desulfovibrio vulgaris).